Reading from the N-terminus, the 326-residue chain is Beta-ketoacyl-[acyl-carrier-protein] synthase III (326 aa).

Residues cysteine 112 and histidine 251 contribute to the active site. The ACP-binding stretch occupies residues 252-256 (QANSR). The active site involves asparagine 281.

Belongs to the thiolase-like superfamily. FabH family. Homodimer.

It is found in the cytoplasm. It catalyses the reaction malonyl-[ACP] + acetyl-CoA + H(+) = 3-oxobutanoyl-[ACP] + CO2 + CoA. The protein operates within lipid metabolism; fatty acid biosynthesis. Catalyzes the condensation reaction of fatty acid synthesis by the addition to an acyl acceptor of two carbons from malonyl-ACP. Catalyzes the first condensation reaction which initiates fatty acid synthesis and may therefore play a role in governing the total rate of fatty acid production. Possesses both acetoacetyl-ACP synthase and acetyl transacylase activities. Its substrate specificity determines the biosynthesis of branched-chain and/or straight-chain of fatty acids. This chain is Beta-ketoacyl-[acyl-carrier-protein] synthase III, found in Clostridium botulinum (strain 657 / Type Ba4).